Consider the following 133-residue polypeptide: Ribonuclease P protein component (133 aa).

Belongs to the RnpA family. As to quaternary structure, consists of a catalytic RNA component (M1 or rnpB) and a protein subunit.

The enzyme catalyses Endonucleolytic cleavage of RNA, removing 5'-extranucleotides from tRNA precursor.. In terms of biological role, RNaseP catalyzes the removal of the 5'-leader sequence from pre-tRNA to produce the mature 5'-terminus. It can also cleave other RNA substrates such as 4.5S RNA. The protein component plays an auxiliary but essential role in vivo by binding to the 5'-leader sequence and broadening the substrate specificity of the ribozyme. This Corynebacterium glutamicum (strain ATCC 13032 / DSM 20300 / JCM 1318 / BCRC 11384 / CCUG 27702 / LMG 3730 / NBRC 12168 / NCIMB 10025 / NRRL B-2784 / 534) protein is Ribonuclease P protein component.